Consider the following 55-residue polypeptide: Large ribosomal subunit protein bL32 (55 aa).

Residues 1-23 (MAVPKKKTSKAKRDQRRAHWKRK) show a composition bias toward basic residues. Residues 1 to 26 (MAVPKKKTSKAKRDQRRAHWKRKATI) are disordered.

It belongs to the bacterial ribosomal protein bL32 family.

The sequence is that of Large ribosomal subunit protein bL32 from Picosynechococcus sp. (strain ATCC 27264 / PCC 7002 / PR-6) (Agmenellum quadruplicatum).